The following is a 207-amino-acid chain: Anthranilate synthase component II (207 aa).

Residues 17-207 (RVLFVDNFDS…DVIRNFLAGL (191 aa)) enclose the Glutamine amidotransferase type-1 domain. 66–68 (GPG) is an L-glutamine binding site. The active-site Nucleophile; for GATase activity is cysteine 96. An L-glutamine-binding site is contributed by 146–147 (SL). Residues histidine 187 and glutamate 189 contribute to the active site.

As to quaternary structure, tetramer of two components I and two components II.

The catalysed reaction is chorismate + L-glutamine = anthranilate + pyruvate + L-glutamate + H(+). It participates in amino-acid biosynthesis; L-tryptophan biosynthesis; L-tryptophan from chorismate: step 1/5. This Haloarcula marismortui (strain ATCC 43049 / DSM 3752 / JCM 8966 / VKM B-1809) (Halobacterium marismortui) protein is Anthranilate synthase component II (trpG1).